The primary structure comprises 717 residues: Probable inactive histone-lysine N-methyltransferase SUVR2 (717 aa).

Over residues 61-73 (QAIQESEEKKADE) the composition is skewed to basic and acidic residues. Residues 61 to 136 (QAIQESEEKK…LGSPTLEGPS (76 aa)) are disordered. The segment covering 120–130 (SALASPSLGSP) has biased composition (low complexity). 9 residues coordinate Zn(2+): Cys-445, Cys-446, Cys-449, Cys-453, Cys-462, Cys-529, Cys-533, Cys-535, and Cys-539. In terms of domain architecture, Pre-SET spans 458 to 547 (MACRCATAFN…NCGNRVVQQG (90 aa)). The 130-residue stretch at 550–679 (NKLQVFFTPN…AMEELTWDYG (130 aa)) folds into the SET domain. Residues 561–563 (RGW) and 635–636 (NH) contribute to the S-adenosyl-L-methionine site. Cys-638 is a Zn(2+) binding site. Tyr-678 is a binding site for S-adenosyl-L-methionine. The region spanning 690 to 706 (SPFHCQCGSDFCRVRKQ) is the Post-SET domain. 3 residues coordinate Zn(2+): Cys-694, Cys-696, and Cys-701.

This sequence belongs to the class V-like SAM-binding methyltransferase superfamily. Histone-lysine methyltransferase family. Interacts with SUVR1, CHR19, CHR28 and itself. Interacts with CHR27.

It is found in the nucleus. The protein localises to the chromosome. Functionally, probable inactive histone-lysine methyltransferase that acts as regulator of transctiptional gene silencing independently of histone H3K9 methylation. Contributes to transcriptional gene silencing at RNA-directed DNA methylation (RdDM) target loci but also at RdDM-independent target loci. Forms a complex with SUVR1 and associates with the SNF2-related chromatin-remodeling proteins CHR19, CHR27, and CHR28, thereby mediating nucleosome positioning and transcriptional silencing. Does not possess histone-lysine methyltransferase activity in vitro, and the conserved catalytic sites of SUVR2 are dispensable for its function in transcriptional gene silencing. This is Probable inactive histone-lysine N-methyltransferase SUVR2 (SUVR2) from Arabidopsis thaliana (Mouse-ear cress).